A 394-amino-acid chain; its full sequence is Galactose-3-O-sulfotransferase 2 (394 aa).

Residues 1–8 (MWGSQHRS) lie on the Cytoplasmic side of the membrane. The helical; Signal-anchor for type II membrane protein transmembrane segment at 9–29 (FQVALWFLVLAVFLLVGFLHV) threads the bilayer. At 30–394 (DFRLLIPDKV…TPKDIPFLKK (365 aa)) the chain is on the lumenal side. Asn72, Asn176, Asn284, and Asn326 each carry an N-linked (GlcNAc...) asparagine glycan.

It belongs to the galactose-3-O-sulfotransferase family.

The protein resides in the golgi apparatus. It is found in the golgi stack membrane. It functions in the pathway protein modification; carbohydrate sulfation. Its activity is regulated as follows. Strongly inhibited by Cu(2+) and Zn(2+). Functionally, transfers a sulfate group to the hydroxyl group at C3 of non-reducing beta-galactosyl residues. Acts both on type 1 (Gal-beta-1,3-GlcNAc) and type 2 (Gal-beta-1,4-GlcNAc) chains with similar efficiency. This chain is Galactose-3-O-sulfotransferase 2 (Gal3st2), found in Mus musculus (Mouse).